Consider the following 394-residue polypeptide: Dual-specificity RNA methyltransferase RlmN (394 aa).

Glutamate 92 functions as the Proton acceptor in the catalytic mechanism. The Radical SAM core domain occupies 98–341 (ENDRGTLCIS…TTVRRTRGDD (244 aa)). Cysteine 105 and cysteine 346 form a disulfide bridge. Residues cysteine 112, cysteine 116, and cysteine 119 each coordinate [4Fe-4S] cluster. Residues 166–167 (GE), serine 198, 220–222 (SLH), and asparagine 303 contribute to the S-adenosyl-L-methionine site. Catalysis depends on cysteine 346, which acts as the S-methylcysteine intermediate. Residues 374 to 394 (DSAVQRRADAAPSGSATETTR) form a disordered region.

The protein belongs to the radical SAM superfamily. RlmN family. [4Fe-4S] cluster is required as a cofactor.

The protein localises to the cytoplasm. It catalyses the reaction adenosine(2503) in 23S rRNA + 2 reduced [2Fe-2S]-[ferredoxin] + 2 S-adenosyl-L-methionine = 2-methyladenosine(2503) in 23S rRNA + 5'-deoxyadenosine + L-methionine + 2 oxidized [2Fe-2S]-[ferredoxin] + S-adenosyl-L-homocysteine. It carries out the reaction adenosine(37) in tRNA + 2 reduced [2Fe-2S]-[ferredoxin] + 2 S-adenosyl-L-methionine = 2-methyladenosine(37) in tRNA + 5'-deoxyadenosine + L-methionine + 2 oxidized [2Fe-2S]-[ferredoxin] + S-adenosyl-L-homocysteine. Its function is as follows. Specifically methylates position 2 of adenine 2503 in 23S rRNA and position 2 of adenine 37 in tRNAs. m2A2503 modification seems to play a crucial role in the proofreading step occurring at the peptidyl transferase center and thus would serve to optimize ribosomal fidelity. This Methylibium petroleiphilum (strain ATCC BAA-1232 / LMG 22953 / PM1) protein is Dual-specificity RNA methyltransferase RlmN.